A 181-amino-acid polypeptide reads, in one-letter code: Oligoribonuclease (181 aa).

One can recognise an Exonuclease domain in the interval 8-171 (LIWIDLEMTG…DDIRESVAEL (164 aa)). Tyrosine 129 is an active-site residue.

It belongs to the oligoribonuclease family.

It is found in the cytoplasm. Functionally, 3'-to-5' exoribonuclease specific for small oligoribonucleotides. The chain is Oligoribonuclease from Shigella flexneri.